A 758-amino-acid chain; its full sequence is Vitamin K-dependent gamma-carboxylase (758 aa).

Residues 1 to 21 are disordered; the sequence is MAVSARSARTSPGSDKVQKDK. Residue Ala-2 is modified to N-acetylalanine. Residues 2–60 lie on the Cytoplasmic side of the membrane; it reads AVSARSARTSPGSDKVQKDKAELISGPRQDSLMGKLLGFEWTDLSSWRRLVTLLNRPTD. Residues 61–81 traverse the membrane as a helical segment; that stretch reads PASLAVFRFLFGFLMVLDIPQ. At 82–113 the chain is on the lumenal side; that stretch reads ERGLSSLDRKYLDGLDVCRFPLLDALRPLPLD. A disulfide bond links Cys-99 and Cys-450. A helical membrane pass occupies residues 114–134; that stretch reads WMYLVYTIMFLGALGMMLGLC. The Cytoplasmic portion of the chain corresponds to 135-136; the sequence is YR. Residues 137–157 traverse the membrane as a helical segment; the sequence is ISCVLFLLPYWYVFLLDKTSW. The Lumenal portion of the chain corresponds to 158–292; that stretch reads NNHSYLYGLL…VSYFHCMNSQ (135 aa). The chain crosses the membrane as a helical span at residues 293–313; the sequence is LFSIGMFSYVMLASSPLFCSP. Residues 314–361 lie on the Cytoplasmic side of the membrane; that stretch reads EWPRKLVSYCPQRLQELLPLKAAPQPSVSCVYKRSRGKSGQKPGLRHQ. The helical transmembrane segment at 362 to 382 threads the bilayer; that stretch reads LGAAFTLLYLLEQLFLPYSHF. The Lumenal segment spans residues 383–758; the sequence is LTQGYNNWTN…SNPDPVHSEF (376 aa). Residues 732–758 form a disordered region; sequence GELSPSNMDSSHSNPPESNPDPVHSEF. Polar residues predominate over residues 735–747; that stretch reads SPSNMDSSHSNPP.

It belongs to the vitamin K-dependent gamma-carboxylase family. In terms of assembly, monomer. May interact with CALU.

The protein resides in the endoplasmic reticulum membrane. It carries out the reaction 4-carboxy-L-glutamyl-[protein] + 2,3-epoxyphylloquinone + H2O + H(+) = phylloquinol + L-glutamyl-[protein] + CO2 + O2. In terms of biological role, mediates the vitamin K-dependent carboxylation of glutamate residues to calcium-binding gamma-carboxyglutamate (Gla) residues with the concomitant conversion of the reduced hydroquinone form of vitamin K to vitamin K epoxide. Catalyzes gamma-carboxylation of various proteins, such as blood coagulation factors (F2, F7, F9 and F10), osteocalcin (BGLAP) or matrix Gla protein (MGP). The chain is Vitamin K-dependent gamma-carboxylase (GGCX) from Pongo abelii (Sumatran orangutan).